Here is a 99-residue protein sequence, read N- to C-terminus: Large ribosomal subunit protein bL27 (99 aa).

A propeptide spanning residues Met-1–Phe-10 is cleaved from the precursor.

This sequence belongs to the bacterial ribosomal protein bL27 family. In terms of processing, the N-terminus is cleaved by ribosomal processing cysteine protease Prp.

This is Large ribosomal subunit protein bL27 from Caldicellulosiruptor bescii (strain ATCC BAA-1888 / DSM 6725 / KCTC 15123 / Z-1320) (Anaerocellum thermophilum).